The following is a 618-amino-acid chain: 1-deoxy-D-xylulose-5-phosphate synthase (618 aa).

Thiamine diphosphate is bound by residues His-70 and 111–113 (GHS). Asp-142 provides a ligand contact to Mg(2+). Residues 143–144 (GS), Asn-171, Tyr-278, and Glu-360 contribute to the thiamine diphosphate site. Asn-171 contributes to the Mg(2+) binding site.

Belongs to the transketolase family. DXPS subfamily. In terms of assembly, homodimer. Mg(2+) is required as a cofactor. Requires thiamine diphosphate as cofactor.

The catalysed reaction is D-glyceraldehyde 3-phosphate + pyruvate + H(+) = 1-deoxy-D-xylulose 5-phosphate + CO2. It participates in metabolic intermediate biosynthesis; 1-deoxy-D-xylulose 5-phosphate biosynthesis; 1-deoxy-D-xylulose 5-phosphate from D-glyceraldehyde 3-phosphate and pyruvate: step 1/1. Functionally, catalyzes the acyloin condensation reaction between C atoms 2 and 3 of pyruvate and glyceraldehyde 3-phosphate to yield 1-deoxy-D-xylulose-5-phosphate (DXP). The chain is 1-deoxy-D-xylulose-5-phosphate synthase from Helicobacter pylori (strain ATCC 700392 / 26695) (Campylobacter pylori).